The chain runs to 405 residues: Acetate kinase (405 aa).

A Mg(2+)-binding site is contributed by Asn7. Lys14 is a binding site for ATP. Arg99 contacts substrate. Asp156 (proton donor/acceptor) is an active-site residue. ATP-binding positions include 215–219, 290–292, and 338–342; these read HLGNG, DMR, and GVGEH. Glu391 provides a ligand contact to Mg(2+).

This sequence belongs to the acetokinase family. In terms of assembly, homodimer. It depends on Mg(2+) as a cofactor. Mn(2+) is required as a cofactor.

The protein localises to the cytoplasm. The enzyme catalyses acetate + ATP = acetyl phosphate + ADP. The protein operates within metabolic intermediate biosynthesis; acetyl-CoA biosynthesis; acetyl-CoA from acetate: step 1/2. Catalyzes the formation of acetyl phosphate from acetate and ATP. Can also catalyze the reverse reaction. The polypeptide is Acetate kinase (Nostoc punctiforme (strain ATCC 29133 / PCC 73102)).